Consider the following 368-residue polypeptide: Cyclic GMP-AMP synthase-like receptor (368 aa).

ATP is bound by residues Ser60 and 72-74 (EYD). The Mg(2+) site is built by Glu72, Asp74, and Asp190. GTP is bound by residues Asp190 and 229–236 (RASFYRQE). Residues 233–236 (YRQE), Lys254, and 268–272 (SYFIK) contribute to the ATP site.

Belongs to the mab-21 family. The cofactor is Mg(2+). Requires Mn(2+) as cofactor.

The catalysed reaction is GTP + ATP = 3',2'-cGAMP + 2 diphosphate. The enzyme catalyses GTP + ATP = pppA(2'-5')pG + diphosphate. It carries out the reaction pppA(2'-5')pG = 3',2'-cGAMP + diphosphate. Its activity is regulated as follows. The enzyme activity is specifically activated by double-stranded RNA (dsRNA). Functionally, nucleotidyltransferase that catalyzes the formation of cyclic GMP-AMP (3',2'-cGAMP) from ATP and GTP and plays a key role in innate immunity. Synthesizes 3',2'-cGAMP in a two-step reaction through production of the linear intermediate pppA(2'-5')pG. Acts as a key sensor of double-stranded RNA (dsRNA), the presence of dsRNA in the cytoplasm being a danger signal that triggers the immune responses. Directly binds dsRNA, activating the nucleotidyltransferase activity, leading to synthesis of 3',2'-cGAMP, a second messenger that binds to and activates Sting, thereby triggering the antiviral immune response via activation of the NF-kappa-B transcription factor Rel (Relish). In Lucilia cuprina (Green bottle fly), this protein is Cyclic GMP-AMP synthase-like receptor.